The primary structure comprises 112 residues: Small ribosomal subunit protein bS6 (112 aa).

The protein belongs to the bacterial ribosomal protein bS6 family.

Its function is as follows. Binds together with bS18 to 16S ribosomal RNA. In Hyphomonas neptunium (strain ATCC 15444), this protein is Small ribosomal subunit protein bS6.